The sequence spans 438 residues: 3-phosphoshikimate 1-carboxyvinyltransferase (438 aa).

Lys21, Ser22, and Arg26 together coordinate 3-phosphoshikimate. Lys21 serves as a coordination point for phosphoenolpyruvate. Phosphoenolpyruvate contacts are provided by Gly95 and Arg123. 3-phosphoshikimate is bound by residues Ser167, Gln169, Asp315, and Lys342. Position 169 (Gln169) interacts with phosphoenolpyruvate. Asp315 serves as the catalytic Proton acceptor. The phosphoenolpyruvate site is built by Arg346 and Arg387.

Belongs to the EPSP synthase family. As to quaternary structure, monomer.

The protein localises to the cytoplasm. The enzyme catalyses 3-phosphoshikimate + phosphoenolpyruvate = 5-O-(1-carboxyvinyl)-3-phosphoshikimate + phosphate. It participates in metabolic intermediate biosynthesis; chorismate biosynthesis; chorismate from D-erythrose 4-phosphate and phosphoenolpyruvate: step 6/7. Its function is as follows. Catalyzes the transfer of the enolpyruvyl moiety of phosphoenolpyruvate (PEP) to the 5-hydroxyl of shikimate-3-phosphate (S3P) to produce enolpyruvyl shikimate-3-phosphate and inorganic phosphate. The sequence is that of 3-phosphoshikimate 1-carboxyvinyltransferase from Coxiella burnetii (strain RSA 331 / Henzerling II).